The following is a 680-amino-acid chain: Probable Xaa-Pro aminopeptidase P (680 aa).

4 residues coordinate Mn(2+): Asp-477, Asp-488, Glu-586, and Glu-600.

The protein belongs to the peptidase M24B family. Requires Mn(2+) as cofactor.

The enzyme catalyses Release of any N-terminal amino acid, including proline, that is linked to proline, even from a dipeptide or tripeptide.. Catalyzes the removal of a penultimate prolyl residue from the N-termini of peptides. This is Probable Xaa-Pro aminopeptidase P (AMPP) from Podospora anserina (strain S / ATCC MYA-4624 / DSM 980 / FGSC 10383) (Pleurage anserina).